The primary structure comprises 135 residues: MLSPKRTRFRKQHRGRMKGISSRGNRICFGRYALQALEPAWITSRQIEAGRRAMTRNVRRGGKIWVRIFPDKPVTLRPSETRMGSGKGSPEYWVAVVKPGRMIYEMGGVAENIAKKAISIAASKMPIRTQFIILR.

Belongs to the universal ribosomal protein uL16 family. As to quaternary structure, part of the 50S ribosomal subunit.

It localises to the plastid. The protein resides in the chloroplast. The protein is Large ribosomal subunit protein uL16c of Populus alba (White poplar).